The chain runs to 201 residues: 3-isopropylmalate dehydratase small subunit (201 aa).

It belongs to the LeuD family. LeuD type 1 subfamily. In terms of assembly, heterodimer of LeuC and LeuD.

It catalyses the reaction (2R,3S)-3-isopropylmalate = (2S)-2-isopropylmalate. The protein operates within amino-acid biosynthesis; L-leucine biosynthesis; L-leucine from 3-methyl-2-oxobutanoate: step 2/4. In terms of biological role, catalyzes the isomerization between 2-isopropylmalate and 3-isopropylmalate, via the formation of 2-isopropylmaleate. The polypeptide is 3-isopropylmalate dehydratase small subunit (Pasteurella multocida (strain Pm70)).